Consider the following 1462-residue polypeptide: DNA polymerase III PolC-type (1462 aa).

The Exonuclease domain maps to 424–580 (YVVFDVETTG…YDAEATGRLL (157 aa)).

Belongs to the DNA polymerase type-C family. PolC subfamily.

The protein resides in the cytoplasm. The enzyme catalyses DNA(n) + a 2'-deoxyribonucleoside 5'-triphosphate = DNA(n+1) + diphosphate. Required for replicative DNA synthesis. This DNA polymerase also exhibits 3' to 5' exonuclease activity. The polypeptide is DNA polymerase III PolC-type (Streptococcus sanguinis (strain SK36)).